The following is a 147-amino-acid chain: MVHLSADEKSAINAVWSKVNIENDGHDALTRLLVVFPWTQRYFSSFGNLSNVAAISGNAKVRAHGKKVLSAVDESIHHLDDIKNFLSVLSTKHAEELHVDPENFKRLADVLVIVLAGKLGAAFTPQVQAAWEKFSAGLVAALSHGYF.

Residues 3-147 enclose the Globin domain; it reads HLSADEKSAI…LVAALSHGYF (145 aa). The heme b site is built by His64 and His93.

Belongs to the globin family. Heterotetramer of two alpha chains and two beta chains. In terms of tissue distribution, red blood cells.

In terms of biological role, this is a larval (tadpole) beta-globin. This is Hemoglobin larval subunit beta-1 from Xenopus laevis (African clawed frog).